Consider the following 1107-residue polypeptide: RNA-dependent RNA polymerase 1 (1107 aa).

Belongs to the RdRP family.

The enzyme catalyses RNA(n) + a ribonucleoside 5'-triphosphate = RNA(n+1) + diphosphate. Functionally, RNA-dependent direct polymerase involved in antiviral silencing. Required for the production of some small RNAs (mainly 21 and some 22 nucleotides) derived from the crucifer-infecting tobamovirus (TMV-cg). Required for turnip mosaic virus (TuMV) silencing and accumulation of viral siRNAs. Involved in cucumber mosaic virus (CMV) silencing. Required for the biogenesis of viral secondary siRNAs, process that follows the production of primary siRNAs derived from viral RNA replication. Specifically targets the positive-strand of the 3 RNA genomes of CMV and preferentially amplifies the 5'-terminal siRNAs of each viral genomic RNA. Not involved in the production of siRNAs derived from a single-stranded 336-nucleotide satellite RNA of CMV. The chain is RNA-dependent RNA polymerase 1 (RDR1) from Arabidopsis thaliana (Mouse-ear cress).